Here is a 371-residue protein sequence, read N- to C-terminus: MPNHHTLLSSSLFPVGSNISTWWNFGSMLLTCTALQISTGFFLAVHYTANINLAFSSIIHITRDVPYGWIMQNLHAIGASLFFLCIYIHIARGLYYGLYMNKGVWLSGTTLLIILMATAFFGYVLPWGQMSFWAATVITNLLTAVPYLGNSLTTWLWGGFSINDPTLTRFFALHFILPFLITSLSSIHIILLHNEGSNNPLGTNSDIDKVPIHPYHSYKDMFMISSMITLLFIVLSFMPDLLNDPENFSKANPMTTPQHIKPEWYFLFAYSILRSIPNKLGGTLALLMSVIILTTTPFTHTSYIRPMTFRPLTQALFWTLIATFITITWTATKQVEPPFTLISQVASVTYFSFFIINPIFGWAENKTMMNN.

The next 4 membrane-spanning stretches (helical) occupy residues 25-45 (FGSM…FLAV), 69-90 (WIMQ…YIHI), 105-125 (WLSG…GYVL), and 170-190 (FFAL…IHII). Heme b-binding residues include H75 and H89. Heme b is bound by residues H174 and H188. A ubiquinone is bound at residue H193. 4 consecutive transmembrane segments (helical) span residues 218–238 (YKDM…LSFM), 280–300 (LGGT…PFTH), 312–332 (LTQA…WTAT), and 339–358 (FTLI…IINP).

Belongs to the cytochrome b family. The cytochrome bc1 complex contains 3 respiratory subunits (MT-CYB, CYC1 and UQCRFS1), 2 core proteins (UQCRC1 and UQCRC2) and probably 6 low-molecular weight proteins. Requires heme b as cofactor.

It is found in the mitochondrion inner membrane. Component of the ubiquinol-cytochrome c reductase complex (complex III or cytochrome b-c1 complex) that is part of the mitochondrial respiratory chain. The b-c1 complex mediates electron transfer from ubiquinol to cytochrome c. Contributes to the generation of a proton gradient across the mitochondrial membrane that is then used for ATP synthesis. This Toxicocalamus preussi (Preuss's forest snake) protein is Cytochrome b (MT-CYB).